Reading from the N-terminus, the 266-residue chain is Electron transfer flavoprotein subunit beta (266 aa).

The protein belongs to the ETF beta-subunit/FixA family. In terms of assembly, heterodimer of an alpha and a beta subunit. Requires FAD as cofactor. The cofactor is AMP.

In terms of biological role, the electron transfer flavoprotein serves as a specific electron acceptor for other dehydrogenases. It transfers the electrons to the main respiratory chain via ETF-ubiquinone oxidoreductase (ETF dehydrogenase). The chain is Electron transfer flavoprotein subunit beta (etfB) from Mycobacterium leprae (strain TN).